Here is a 485-residue protein sequence, read N- to C-terminus: MVDFATRVAKSFKDKVSGIDNKKGTDIQGVLGLDSTPNVLFASVFAAGGGSYDNFFYKVENGRADFRNFANKGTSYKNLEKVYNDYKNLIGSNGLFASKDGSYSSNFEKFHQLAFYVGSSSGYNYAFADETAKRLKFGDSAIEYPNDTLEIKAPTNNSQSGDGNGGTNNDNLLGTFDIREKSNGKKGESNGKQGNGQDKKTISLYKDSIPKEKTEGTDAILISDNQLINQLQTAAKTSSSQNKANTAAITFKQSNKSETDQSTTSQVIGYTTTASLKADKKNIFDVKKLNNEKSERKIIVGATVETLNQANTLQANEAIIKPAPGKYQSTDSHKVMITQGPNIVGIHANEKEDKETQKFINWYLNKEESWSVQNSGSTTTKKQTAAQYFAEQSSYITPLKNNFKADQSATKDSTVNTNYFTKQTFDLFKEVNDGKVLGFNDPSDFRSGKFRNTIGSTFNATISSKVDFNKFFENFKASLGSGFER.

The disordered stretch occupies residues 151-201 (IKAPTNNSQSGDGNGGTNNDNLLGTFDIREKSNGKKGESNGKQGNGQDKKT). A compositionally biased stretch (low complexity) spans 155 to 174 (TNNSQSGDGNGGTNNDNLLG). Residues 177 to 189 (DIREKSNGKKGES) are compositionally biased toward basic and acidic residues.

This sequence belongs to the MG185/MG260 family.

This is an uncharacterized protein from Mycoplasma pneumoniae (strain ATCC 29342 / M129 / Subtype 1) (Mycoplasmoides pneumoniae).